We begin with the raw amino-acid sequence, 162 residues long: Large ribosomal subunit protein uL10 (162 aa).

Belongs to the universal ribosomal protein uL10 family. As to quaternary structure, part of the ribosomal stalk of the 50S ribosomal subunit. The N-terminus interacts with L11 and the large rRNA to form the base of the stalk. The C-terminus forms an elongated spine to which L12 dimers bind in a sequential fashion forming a multimeric L10(L12)X complex.

Functionally, forms part of the ribosomal stalk, playing a central role in the interaction of the ribosome with GTP-bound translation factors. The polypeptide is Large ribosomal subunit protein uL10 (Aliarcobacter butzleri (strain RM4018) (Arcobacter butzleri)).